An 807-amino-acid polypeptide reads, in one-letter code: Putative transmembrane protein ORF807 (807 aa).

Transmembrane regions (helical) follow at residues Val210 to Leu230, Gly234 to Phe254, Val270 to Leu290, Ile459 to Thr479, and Val657 to Val677.

It is found in the host membrane. The sequence is that of Putative transmembrane protein ORF807 from Acidianus filamentous virus 1 (isolate United States/Yellowstone) (AFV-1).